The following is a 362-amino-acid chain: Phenylalanine--tRNA ligase alpha subunit (362 aa).

Glu-263 is a binding site for Mg(2+).

The protein belongs to the class-II aminoacyl-tRNA synthetase family. Phe-tRNA synthetase alpha subunit type 1 subfamily. Tetramer of two alpha and two beta subunits. Mg(2+) is required as a cofactor.

It is found in the cytoplasm. The enzyme catalyses tRNA(Phe) + L-phenylalanine + ATP = L-phenylalanyl-tRNA(Phe) + AMP + diphosphate + H(+). This is Phenylalanine--tRNA ligase alpha subunit from Caulobacter sp. (strain K31).